Here is a 556-residue protein sequence, read N- to C-terminus: Formate--tetrahydrofolate ligase 1 (556 aa).

65 to 72 (TPAGEGKS) lines the ATP pocket.

This sequence belongs to the formate--tetrahydrofolate ligase family.

The catalysed reaction is (6S)-5,6,7,8-tetrahydrofolate + formate + ATP = (6R)-10-formyltetrahydrofolate + ADP + phosphate. The protein operates within one-carbon metabolism; tetrahydrofolate interconversion. In Streptococcus pyogenes serotype M4 (strain MGAS10750), this protein is Formate--tetrahydrofolate ligase 1.